Reading from the N-terminus, the 160-residue chain is 3-hydroxyacyl-[acyl-carrier-protein] dehydratase FabZ (160 aa).

The active site involves H63.

Belongs to the thioester dehydratase family. FabZ subfamily.

The protein resides in the cytoplasm. It catalyses the reaction a (3R)-hydroxyacyl-[ACP] = a (2E)-enoyl-[ACP] + H2O. Its function is as follows. Involved in unsaturated fatty acids biosynthesis. Catalyzes the dehydration of short chain beta-hydroxyacyl-ACPs and long chain saturated and unsaturated beta-hydroxyacyl-ACPs. The polypeptide is 3-hydroxyacyl-[acyl-carrier-protein] dehydratase FabZ (Xylella fastidiosa (strain 9a5c)).